Here is a 442-residue protein sequence, read N- to C-terminus: MEESRQLESSIDRLLNEEKQMRLAENVAGTRKAATEILKLCFEAKDWKLLNEQILNLSKKRGQLKQAVQSMVQQAMQYIDQTLDIETRIELIKTLNNVAAGKIYVEIERARLTKMLAKIKEEQGLIAEAADLMQEVAVETFGAMAKTEKIAFILEQVRLCLDQKDFVRAQILSRKINPRVFDADTTKEKKKPKEGENMVEEAPADIPTLLVLKRIYYELMIRYYSHNNEYIEICRSYKAIYDIPSVKENPEQWIPVLRKICWFLALAPHDPMQSSLLNATLEDKKLSEIPDFKMLLKQIVTMEVIQWTSLWNKYKDEFENEKNMIGGSLGDKAGEDLKLRIIEHNILVVSKYYSRITFKRLAELLCLTTEEAEKHLSEMVVSKALIAKIDRPSGIICFQIVKDSNEILNSWATNLEKLLDLVEKSCHQIHKETMVHKVALRA.

Residues methionine 1–alanine 129 are a coiled coil. The PCI domain maps to glutamate 232–aspartate 403.

It belongs to the proteasome subunit p55 family. In terms of assembly, component of the 19S regulatory particle (RP/PA700) lid subcomplex of the 26S proteasome. The 26S proteasome is composed of a core protease (CP), known as the 20S proteasome, capped at one or both ends by the 19S regulatory particle (RP/PA700). The RP/PA700 complex is composed of at least 17 different subunits in two subcomplexes, the base and the lid, which form the portions proximal and distal to the 20S proteolytic core, respectively. As to expression, ubiquitous with highest expression in flowers.

It is found in the cytoplasm. It localises to the nucleus. Functionally, acts as a regulatory subunit of the 26 proteasome which is involved in the ATP-dependent degradation of ubiquitinated proteins. Acts redundantly with RPN5A. This is 26S proteasome non-ATPase regulatory subunit 12 homolog B (RPN5B) from Arabidopsis thaliana (Mouse-ear cress).